The sequence spans 330 residues: MKIDVHHHFYPQAFREALEAAGGDPSGWYIPPWTLELDQEINATLNVTTTILSVTAPGPVIAKDPAAAASLARECNRSAAAIRDAAPAQYGFFASVPSLFDTALALEEIRYALDELHADGVTLFTRYGQGANYLGHEAFAPIWAELSRRQAVVFIHPTHPQDTALINRALPQPMFDYPHETGRTAMDLLTSGRLRQHRGCRVILSHAGGTLPYLIHRAATMLPCMPPDRNIGLSRDEILDTAREVFYFDTAISANEVTLSALARFAKPGHILFGSDFPNAPRDAIVRFTRFVEEEAAALPDGVTVEALKENALQLFPRLKRAEANGVPKI.

Zn(2+) contacts are provided by His-6, His-8, His-156, and Asp-276.

The protein belongs to the metallo-dependent hydrolases superfamily. ACMSD family. Monomer.

It localises to the cytoplasm. The protein localises to the cytosol. It catalyses the reaction 6-methylsalicylate + H(+) = 3-methylphenol + CO2. Its pathway is secondary metabolite biosynthesis. Functionally, 6-methylsalicylic acid decarboxylase; part of the gene cluster that mediates the biosynthesis of aculins. The pathway begins with the synthesis of 6-methylsalicylic acid by the polyketide synthase (PKS) acuA via condensation of acetate and malonate units. The 6-methylsalicylic acid decarboxylase acuB then catalyzes the decarboxylation of 6-methylsalicylic acid to yield m-cresol (also known as 3-methylphenol). These first reactions occur in the cytosol. The intermediate m-cresol is then transported into the endoplasmic reticulum where the cytochrome P450 monooxygenase acuC converts it to m-hydroxybenzyl alcohol, which is further converted to gentisyl alcohol by the cytochrome P450 monooxygenase acuD. Gentisyl alcohol is further oxidized by the oxidoreductase acuE that probably catalyzes hydroxylation of the aromatic ring. The aromatic system might then be opened by oxidation through a Baeyer-Villiger type of oxidation, which could be catalyzed by acuF, with the carboxylic acid at C-1 subsequently reduced to an aldehyde by acuG. Subsequently, a hemiacetal is formed, before the dehydrogenase acuH would reduce the double bond between C-4 and C-6. Finally, keto-enol tautomerism results in formation of aculinic acid, which exists as two diastereomers (both R/S configurations at C-1) by non-enzymatic hemiacetal formation. The carboxypeptidase acuI could be involved in the linking of aculinic acid to an aculene A moiety produced by the aculene biosynthesis cluster and which leads to the production of aculin A. AcuI may also be involved in the attachment of proline to aculinic acid to form epi-aculins A and B. This Aspergillus aculeatus (strain ATCC 16872 / CBS 172.66 / WB 5094) protein is 6-methylsalicylic acid decarboxylase acuB.